Reading from the N-terminus, the 429-residue chain is Serum response factor-binding protein 1 (429 aa).

An N-acetylalanine modification is found at Ala-2. Coiled-coil stretches lie at residues 42 to 67 and 108 to 146; these read KGTE…AMKE and LLKK…NHSE. 2 disordered regions span residues 131-157 and 176-429; these read AEVE…NGSN and LAKK…TFDD. Residues 146–157 show a composition bias toward polar residues; that stretch reads ENTLYSNDNGSN. The segment covering 183 to 195 has biased composition (basic and acidic residues); the sequence is NSKEKIAKMEHGP. A Glycyl lysine isopeptide (Lys-Gly) (interchain with G-Cter in SUMO2) cross-link involves residue Lys-190. Phosphoserine is present on residues Ser-203, Ser-205, Ser-264, Ser-279, and Ser-281. The segment covering 249-265 has biased composition (acidic residues); the sequence is GGEEFCEEEKEYFDDST. The span at 296–341 shows a compositional bias: basic and acidic residues; that stretch reads KESSCHSSVKEQKPLEKVFLKEDTGETHGDTRNDKIKPSTETRKLE. Lys-316 is covalently cross-linked (Glycyl lysine isopeptide (Lys-Gly) (interchain with G-Cter in SUMO2)). Phosphoserine occurs at positions 349, 351, and 367. A compositionally biased stretch (basic and acidic residues) spans 357 to 367; it reads NFKEQAPKTRS. A compositionally biased stretch (polar residues) spans 373-383; it reads NEPQIKNQFNK.

In terms of assembly, interacts with SRF. Forms complexes with SRF and SRF cofactors ARID2, MYOCD and NKX2-5. Interacts with the N-terminus of SLC2A4. Abundantly expressed in heart and skeletal muscle, and at much lower levels in brain and lung.

The protein resides in the cytoplasm. It is found in the perinuclear region. Functionally, may be involved in regulating transcriptional activation of cardiac genes during the aging process. May play a role in biosynthesis and/or processing of SLC2A4 in adipose cells. In Homo sapiens (Human), this protein is Serum response factor-binding protein 1.